The primary structure comprises 505 residues: MSERKVRVRFAPSPTGALHIGGVRTALYNYLFARQHGGDLIFRIEDTDSNRFVPGAEEYIIESFKWLGINFDEGVSFGGNYGPYRQSERRDIYKKYVQVLLDSGKAYIAFDTPAELDAKRQEISNFQYDASTRMSMRNSLTLPKEEVDALIADGKQYVVRFKIEPNEDVHVHDIIRGEVVINSSILDDKVLYKSADELPTYHLANIVDDHLMEVSHVIRGEEWLPSAPLHVLLYRAFGWADTMPEFAHLPLLLKPDGNGKLSKRDGDRLGFPVFPLEWHDPKTGEVSSGYRESGYLPEAVINFLALLGWNPGNDQELMSLDELVKLFDLHRCSKAGAKFDFEKGKWFNHEYILKKSNEEVAGLFMPILKEHGIEAPMDKVVTVVGLMKDRVSFIKDLWETCKFFFVAPTEYDEKTRKKRWKEDSPERMLELADVLEALDDFSLENQEAVVMKWIEDKGYHLGNIMNAFRLTLVGEGKGPHMFDISAVLGKEETLRRIRRAVEVLK.

A 'HIGH' region motif is present at residues 12-22; that stretch reads PSPTGALHIGG. The short motif at 260 to 264 is the 'KMSKS' region element; that stretch reads KLSKR. Lys-263 provides a ligand contact to ATP.

Belongs to the class-I aminoacyl-tRNA synthetase family. Glutamate--tRNA ligase type 1 subfamily. As to quaternary structure, monomer.

It is found in the cytoplasm. It catalyses the reaction tRNA(Glu) + L-glutamate + ATP = L-glutamyl-tRNA(Glu) + AMP + diphosphate. Functionally, catalyzes the attachment of glutamate to tRNA(Glu) in a two-step reaction: glutamate is first activated by ATP to form Glu-AMP and then transferred to the acceptor end of tRNA(Glu). The chain is Glutamate--tRNA ligase from Phocaeicola vulgatus (strain ATCC 8482 / DSM 1447 / JCM 5826 / CCUG 4940 / NBRC 14291 / NCTC 11154) (Bacteroides vulgatus).